The primary structure comprises 263 residues: Proliferating cell nuclear antigen (263 aa).

The DNA-binding element occupies 61–80 (RCDRTINLGLSLANMSKALK).

The protein belongs to the PCNA family. Homotrimer. Forms a complex with activator 1 heteropentamer in the presence of ATP.

It is found in the nucleus. In terms of biological role, this protein is an auxiliary protein of DNA polymerase delta and is involved in the control of eukaryotic DNA replication by increasing the polymerase's processibility during elongation of the leading strand. In Caenorhabditis elegans, this protein is Proliferating cell nuclear antigen (pcn-1).